The sequence spans 373 residues: tRNA N6-adenosine threonylcarbamoyltransferase (373 aa).

Residues H128, H132, and Y149 each contribute to the a divalent metal cation site. Residues 149 to 153 (YVSGG), D181, G196, E200, and N302 contribute to the substrate site. D331 contributes to the a divalent metal cation binding site.

It belongs to the KAE1 / TsaD family. Component of the EKC/KEOPS complex composed of at least BUD32, CGI121, GON7, KAE1 and PCC1; the whole complex dimerizes. Requires a divalent metal cation as cofactor.

It is found in the cytoplasm. The protein resides in the nucleus. It catalyses the reaction L-threonylcarbamoyladenylate + adenosine(37) in tRNA = N(6)-L-threonylcarbamoyladenosine(37) in tRNA + AMP + H(+). Its function is as follows. Component of the EKC/KEOPS complex that is required for the formation of a threonylcarbamoyl group on adenosine at position 37 (t(6)A37) in tRNAs that read codons beginning with adenine. The complex is probably involved in the transfer of the threonylcarbamoyl moiety of threonylcarbamoyl-AMP (TC-AMP) to the N6 group of A37. KAE1 likely plays a direct catalytic role in this reaction, but requires other protein(s) of the complex to fulfill this activity. The EKC/KEOPS complex also promotes both telomere uncapping and telomere elongation. The complex is required for efficient recruitment of transcriptional coactivators. This chain is tRNA N6-adenosine threonylcarbamoyltransferase, found in Candida glabrata (strain ATCC 2001 / BCRC 20586 / JCM 3761 / NBRC 0622 / NRRL Y-65 / CBS 138) (Yeast).